A 189-amino-acid chain; its full sequence is Ras-like protein rasG (189 aa).

10–17 (GGGGVGKS) provides a ligand contact to GTP. The Effector region motif lies at 32–40 (YDPTIEDSY). GTP is bound by residues 57–61 (DTAGQ) and 116–119 (NKCD). A disordered region spans residues 169–189 (KGDSKPEKGKKKRPLKACTLL). C186 is subject to Cysteine methyl ester. C186 is lipidated: S-geranylgeranyl cysteine. The propeptide at 187–189 (TLL) is removed in mature form.

It belongs to the small GTPase superfamily. Ras family. As to quaternary structure, interacts with ripA.

It localises to the cell membrane. The enzyme catalyses GTP + H2O = GDP + phosphate + H(+). With respect to regulation, alternates between an inactive form bound to GDP and an active form bound to GTP. Activated by a guanine nucleotide-exchange factor (GEF) and inactivated by a GTPase-activating protein (GAP). Its function is as follows. Ras proteins bind GDP/GTP and possess intrinsic GTPase activity. This chain is Ras-like protein rasG (rasG), found in Dictyostelium discoideum (Social amoeba).